Consider the following 68-residue polypeptide: Molybdenum-pterin-binding protein 1 (68 aa).

The Mop domain occupies 2-68 (SISARNQLKG…IKSTDVMILA (67 aa)).

In terms of biological role, binds one mole of molybdenum per mole of protein and contains a pterin. This Clostridium pasteurianum protein is Molybdenum-pterin-binding protein 1 (mopI).